The following is a 266-amino-acid chain: MHVNGKVALVTGAAQGIGRAFAEALLLKGAKVALVDWNLEAGVQCKAALDEQFEPQKTLFIQCDVADQQQLRDTFRKVVDHFGRLDILVNNAGVNNEKNWEKTLQINLVSVISGTYLGLDYMSKQNGGEGGIIINMSSLAGLMPVAQQPVYCASKHGIVGFTRSAALAANLMNSGVRLNAICPGFVNTAILESIEKEENMGQYIEYKDHIKDMIKYYGILDPPLIANGLITLIEDDALNGAIMKITTSKGIHFQDYDTTPFQAKTQ.

NAD(+) contacts are provided by residues Gly-12 to Ala-20, Asp-36 to Trp-37, Cys-63 to Val-65, and Asn-91. Positions 138 and 148 each coordinate substrate. The active-site Proton acceptor is the Tyr-151. Residues Tyr-151–Lys-155 and Val-186–Thr-188 each bind NAD(+).

The protein belongs to the short-chain dehydrogenases/reductases (SDR) family. As to quaternary structure, homodimer. In terms of tissue distribution, detected in colon epithelium (at protein level).

It localises to the cytoplasm. The catalysed reaction is prostaglandin E2 + NAD(+) = 15-oxoprostaglandin E2 + NADH + H(+). It carries out the reaction (15S)-hydroxy-(5Z,8Z,11Z,13E)-eicosatetraenoate + NAD(+) = 15-oxo-(5Z,8Z,11Z,13E)-eicosatetraenoate + NADH + H(+). The enzyme catalyses (11R)-hydroxy-(5Z,8Z,12E,14Z)-eicosatetraenoate + NAD(+) = 11-oxo-(5Z,8Z,12E,14Z)-eicosatetraenoate + NADH + H(+). It catalyses the reaction lipoxin A4 + NAD(+) = 15-oxo-(5S,6R)-dihydroxy-(7E,9E,11Z,13E)-eicosatetraenoate + NADH + H(+). The catalysed reaction is 15-oxo-(5S,6R)-dihydroxy-(7E,9E,11Z)-eicosatrienoate + NADH + H(+) = (5S,6R,15S)-trihydroxy-(7E,9E,11Z)-eicosatrienoate + NAD(+). It carries out the reaction prostaglandin A1 + NAD(+) = 15-oxo-prostaglandin A1 + NADH + H(+). The enzyme catalyses prostaglandin E1 + NAD(+) = 15-oxoprostaglandin E1 + NADH + H(+). It catalyses the reaction 14-hydroxy-(4Z,7Z,10Z,12E,16Z,19Z)-docosahexaenoate + NAD(+) = 14-oxo-(4Z,7Z,10Z,12E,16Z,19Z)-docosahexaenoate + NADH + H(+). The catalysed reaction is resolvin E1 + NAD(+) = 18-oxo-resolvin E1 + NADH + H(+). It carries out the reaction resolvin D1 + NAD(+) = 8-oxoresolvin D1 + NADH + H(+). The enzyme catalyses resolvin D1 + NAD(+) = 17-oxoresolvin D1 + NADH + H(+). It catalyses the reaction resolvin D2 + NAD(+) = 7-oxoresolvin D2 + NADH + H(+). The catalysed reaction is resolvin D2 + NAD(+) = 16-oxoresolvin D2 + NADH + H(+). Its function is as follows. Catalyzes the NAD-dependent dehydrogenation (oxidation) of a broad array of hydroxylated polyunsaturated fatty acids (mainly eicosanoids and docosanoids, including prostaglandins, lipoxins and resolvins), yielding their corresponding keto (oxo) metabolites. Decreases the levels of the pro-proliferative prostaglandins such as prostaglandin E2 (whose activity is increased in cancer because of an increase in the expression of cyclooxygenase 2) and generates oxo-fatty acid products that can profoundly influence cell function by abrogating pro-inflammatory cytokine expression. Converts resolvins E1, D1 and D2 to their oxo products, which represents a mode of resolvin inactivation. Resolvin E1 plays important roles during the resolution phase of acute inflammation, while resolvins D1 and D2 have a unique role in obesity-induced adipose inflammation. The chain is 15-hydroxyprostaglandin dehydrogenase [NAD(+)] from Homo sapiens (Human).